The following is a 414-amino-acid chain: Gamma-glutamyl phosphate reductase (414 aa).

It belongs to the gamma-glutamyl phosphate reductase family.

Its subcellular location is the cytoplasm. It catalyses the reaction L-glutamate 5-semialdehyde + phosphate + NADP(+) = L-glutamyl 5-phosphate + NADPH + H(+). Its pathway is amino-acid biosynthesis; L-proline biosynthesis; L-glutamate 5-semialdehyde from L-glutamate: step 2/2. Catalyzes the NADPH-dependent reduction of L-glutamate 5-phosphate into L-glutamate 5-semialdehyde and phosphate. The product spontaneously undergoes cyclization to form 1-pyrroline-5-carboxylate. The chain is Gamma-glutamyl phosphate reductase from Geobacillus thermodenitrificans (strain NG80-2).